The primary structure comprises 474 residues: Pyruvate kinase (474 aa).

R33 is a binding site for substrate. Residues N35, S37, and D67 each coordinate K(+). 35–38 (NFSH) contacts ATP. ATP contacts are provided by R74 and K155. A Mg(2+)-binding site is contributed by E220. Substrate-binding residues include G243, D244, and T276. D244 serves as a coordination point for Mg(2+).

This sequence belongs to the pyruvate kinase family. Homotetramer. Mg(2+) is required as a cofactor. K(+) serves as cofactor.

The enzyme catalyses pyruvate + ATP = phosphoenolpyruvate + ADP + H(+). It participates in carbohydrate degradation; glycolysis; pyruvate from D-glyceraldehyde 3-phosphate: step 5/5. The protein is Pyruvate kinase (pyk) of Corynebacterium efficiens (strain DSM 44549 / YS-314 / AJ 12310 / JCM 11189 / NBRC 100395).